Reading from the N-terminus, the 93-residue chain is Cell division topological specificity factor (93 aa).

Belongs to the MinE family.

Its function is as follows. Prevents the cell division inhibition by proteins MinC and MinD at internal division sites while permitting inhibition at polar sites. This ensures cell division at the proper site by restricting the formation of a division septum at the midpoint of the long axis of the cell. The chain is Cell division topological specificity factor from Syntrophus aciditrophicus (strain SB).